The primary structure comprises 1134 residues: Early transcription factor large subunit homolog (1134 aa).

In terms of domain architecture, Helicase ATP-binding spans 52-352; sequence KGGRAFFPCD…PNGQPLQRQQ (301 aa). 99-106 is an ATP binding site; it reads WQTGTGKS. A DEAH box motif is present at residues 281–284; sequence DEIH. One can recognise a Helicase C-terminal domain in the interval 524–725; the sequence is MMKDILSIIR…EGDKALRKHA (202 aa).

This sequence belongs to the DEAD box helicase family. DEAH subfamily.

The protein localises to the virion. It catalyses the reaction ATP + H2O = ADP + phosphate + H(+). Functionally, putative initation factor. The protein is Early transcription factor large subunit homolog of African swine fever virus (isolate Pig/Kenya/KEN-50/1950) (ASFV).